The primary structure comprises 349 residues: Small ribosomal subunit protein uS2 (349 aa).

Belongs to the universal ribosomal protein uS2 family.

The sequence is that of Small ribosomal subunit protein uS2 from Methylocella silvestris (strain DSM 15510 / CIP 108128 / LMG 27833 / NCIMB 13906 / BL2).